A 289-amino-acid polypeptide reads, in one-letter code: uncharacterized protein (289 aa).

This is an uncharacterized protein from Acanthamoeba polyphaga mimivirus (APMV).